A 150-amino-acid chain; its full sequence is D-aminoacyl-tRNA deacylase (150 aa).

The Gly-cisPro motif, important for rejection of L-amino acids motif lies at 138–139 (GP).

Belongs to the DTD family. As to quaternary structure, homodimer.

The protein localises to the cytoplasm. It catalyses the reaction glycyl-tRNA(Ala) + H2O = tRNA(Ala) + glycine + H(+). It carries out the reaction a D-aminoacyl-tRNA + H2O = a tRNA + a D-alpha-amino acid + H(+). Its function is as follows. An aminoacyl-tRNA editing enzyme that deacylates mischarged D-aminoacyl-tRNAs. Also deacylates mischarged glycyl-tRNA(Ala), protecting cells against glycine mischarging by AlaRS. Acts via tRNA-based rather than protein-based catalysis; rejects L-amino acids rather than detecting D-amino acids in the active site. By recycling D-aminoacyl-tRNA to D-amino acids and free tRNA molecules, this enzyme counteracts the toxicity associated with the formation of D-aminoacyl-tRNA entities in vivo and helps enforce protein L-homochirality. This Petrotoga mobilis (strain DSM 10674 / SJ95) protein is D-aminoacyl-tRNA deacylase.